The chain runs to 332 residues: DNA-directed RNA polymerase subunit alpha (332 aa).

Positions 1–226 (MLIAQRPTLT…ELFGLCRELN (226 aa)) are alpha N-terminal domain (alpha-NTD). The alpha C-terminal domain (alpha-CTD) stretch occupies residues 245–332 (PEMNIPIEDL…GGTFFSPEDE (88 aa)).

The protein belongs to the RNA polymerase alpha chain family. Homodimer. The RNAP catalytic core consists of 2 alpha, 1 beta, 1 beta' and 1 omega subunit. When a sigma factor is associated with the core the holoenzyme is formed, which can initiate transcription.

The enzyme catalyses RNA(n) + a ribonucleoside 5'-triphosphate = RNA(n+1) + diphosphate. DNA-dependent RNA polymerase catalyzes the transcription of DNA into RNA using the four ribonucleoside triphosphates as substrates. The polypeptide is DNA-directed RNA polymerase subunit alpha (Bifidobacterium adolescentis (strain ATCC 15703 / DSM 20083 / NCTC 11814 / E194a)).